Reading from the N-terminus, the 197-residue chain is Penicillin-binding protein activator LpoB (197 aa).

Positions 1–17 (MIKRMSGIALAALLLSG) are cleaved as a signal peptide. Residue C18 is the site of N-palmitoyl cysteine attachment. A lipid anchor (S-diacylglycerol cysteine) is attached at C18. Residues 23–57 (PRGETPSQPPAPTTPAKPSVVPTPTPPVVTPVPQP) are disordered. Pro residues predominate over residues 29–57 (SQPPAPTTPAKPSVVPTPTPPVVTPVPQP).

This sequence belongs to the LpoB family. As to quaternary structure, interacts with PBP1b.

Its subcellular location is the cell outer membrane. Its function is as follows. Regulator of peptidoglycan synthesis that is essential for the function of penicillin-binding protein 1B (PBP1b). The polypeptide is Penicillin-binding protein activator LpoB (Edwardsiella piscicida).